The following is a 166-amino-acid chain: MPSFDVVSEVNKVEVRNALDQANKEVSTRYDFKGSDARIEFNDKEVTLFADTEFQLDQVNDILVNKLSKRSVDVRSLDYGKLEKVSGNKVKKVLKIKEGLDSDLAKKIVKLLKDSKMKVQASIQGEAVRVSGAKRDVLQEAIALLKAEIASDLENGAPLQFNNFRD.

The protein belongs to the YajQ family.

Functionally, nucleotide-binding protein. The polypeptide is Nucleotide-binding protein CV_2047 (Chromobacterium violaceum (strain ATCC 12472 / DSM 30191 / JCM 1249 / CCUG 213 / NBRC 12614 / NCIMB 9131 / NCTC 9757 / MK)).